The sequence spans 480 residues: Protein nucleotidyltransferase YdiU (480 aa).

Residues G86, G88, R89, K109, D121, G122, R172, and R179 each coordinate ATP. D248 serves as the catalytic Proton acceptor. Mg(2+) is bound by residues N249 and D258. Residue D258 participates in ATP binding.

Belongs to the SELO family. Mg(2+) is required as a cofactor. The cofactor is Mn(2+).

It carries out the reaction L-seryl-[protein] + ATP = 3-O-(5'-adenylyl)-L-seryl-[protein] + diphosphate. The catalysed reaction is L-threonyl-[protein] + ATP = 3-O-(5'-adenylyl)-L-threonyl-[protein] + diphosphate. The enzyme catalyses L-tyrosyl-[protein] + ATP = O-(5'-adenylyl)-L-tyrosyl-[protein] + diphosphate. It catalyses the reaction L-histidyl-[protein] + UTP = N(tele)-(5'-uridylyl)-L-histidyl-[protein] + diphosphate. It carries out the reaction L-seryl-[protein] + UTP = O-(5'-uridylyl)-L-seryl-[protein] + diphosphate. The catalysed reaction is L-tyrosyl-[protein] + UTP = O-(5'-uridylyl)-L-tyrosyl-[protein] + diphosphate. Nucleotidyltransferase involved in the post-translational modification of proteins. It can catalyze the addition of adenosine monophosphate (AMP) or uridine monophosphate (UMP) to a protein, resulting in modifications known as AMPylation and UMPylation. This chain is Protein nucleotidyltransferase YdiU, found in Klebsiella pneumoniae (strain 342).